Consider the following 428-residue polypeptide: Homoserine dehydrogenase (428 aa).

Residues Phe-10, Thr-12, Val-13, Arg-44, and Lys-106 each coordinate NADPH. Val-13 lines the NAD(+) pocket. 3 residues coordinate NADP(+): Val-13, Arg-44, and Lys-106. Residues Glu-130, Val-133, Gly-135, and Ile-137 each coordinate Na(+). NADP(+) is bound by residues Gly-188 and Glu-191. The L-homoserine site is built by Glu-191 and Asp-202. Residue Lys-206 is the Proton donor of the active site. Gly-303 provides a ligand contact to NADPH. An NAD(+)-binding site is contributed by Gly-303. Gly-303 serves as a coordination point for NADP(+). An ACT domain is found at 351–425 (YFSVETPDST…DFKLLNYFKV (75 aa)).

It belongs to the homoserine dehydrogenase family. It depends on a metal cation as a cofactor.

It carries out the reaction L-homoserine + NADP(+) = L-aspartate 4-semialdehyde + NADPH + H(+). The catalysed reaction is L-homoserine + NAD(+) = L-aspartate 4-semialdehyde + NADH + H(+). It functions in the pathway amino-acid biosynthesis; L-methionine biosynthesis via de novo pathway; L-homoserine from L-aspartate: step 3/3. It participates in amino-acid biosynthesis; L-threonine biosynthesis; L-threonine from L-aspartate: step 3/5. Catalyzes the conversion of L-aspartate-beta-semialdehyde (L-Asa) to L-homoserine (L-Hse), the third step in the biosynthesis of threonine and methionine from aspartate. The protein is Homoserine dehydrogenase (hom) of Lactococcus lactis subsp. lactis (strain IL1403) (Streptococcus lactis).